The following is a 102-amino-acid chain: Small ribosomal subunit protein uS10 (102 aa).

It belongs to the universal ribosomal protein uS10 family. As to quaternary structure, part of the 30S ribosomal subunit.

Involved in the binding of tRNA to the ribosomes. This is Small ribosomal subunit protein uS10 from Bartonella tribocorum (strain CIP 105476 / IBS 506).